A 249-amino-acid polypeptide reads, in one-letter code: Probable transcriptional regulatory protein DICTH_1505 (249 aa).

The protein belongs to the TACO1 family.

The protein resides in the cytoplasm. The chain is Probable transcriptional regulatory protein DICTH_1505 from Dictyoglomus thermophilum (strain ATCC 35947 / DSM 3960 / H-6-12).